The following is a 258-amino-acid chain: Glutamate racemase (258 aa).

Substrate-binding positions include 11-12 (DS) and 43-44 (YG). The Proton donor/acceptor role is filled by Cys74. 75 to 76 (NT) contacts substrate. Cys187 acts as the Proton donor/acceptor in catalysis. Substrate is bound at residue 188–189 (TH).

This sequence belongs to the aspartate/glutamate racemases family.

The catalysed reaction is L-glutamate = D-glutamate. The protein operates within cell wall biogenesis; peptidoglycan biosynthesis. In terms of biological role, provides the (R)-glutamate required for cell wall biosynthesis. In Bifidobacterium adolescentis (strain ATCC 15703 / DSM 20083 / NCTC 11814 / E194a), this protein is Glutamate racemase.